The chain runs to 347 residues: MAAPRWIGPLLLLLLHFVAAVAGKSYYDVLQVPKGASEDQIKRSYRKLALKYHPDKNPNNEEANKRFAEINNAYEILTDQEKRKIYDRYGEEGLKQFQAQGGRGGGGGMNIQDIFSSFFGGGGGGMEEEEEQIIKGDDVIVELDASLEDLYMGGSLKVWREKNVIKPAPGKRRCNCRNEVYHRQIGPGMYQQMTEQVCDQCANVKYVREGDFLTVDIEKGMQDGQEVSFFEEGEPKIDGEPGDLKFRIRTAPHERFRREGNDLHTTVTISLLQALVGFEKTIKHLDNHMVEIGTKGITKPKEVRKFKGEGMPLYQSNKKGDLYVTFEVLFPKTLTDDQKSKLKSILT.

The first 23 residues, 1-23, serve as a signal peptide directing secretion; that stretch reads MAAPRWIGPLLLLLLHFVAAVAG. Residues 25–90 form the J domain; it reads SYYDVLQVPK…EKRKIYDRYG (66 aa).

In terms of assembly, interacts with BIP1.

It is found in the endoplasmic reticulum. Its function is as follows. May play a role in protein folding in the endoplasmic reticulum. This Oryza sativa subsp. japonica (Rice) protein is DnaJ protein ERDJ3B.